The sequence spans 285 residues: ATP phosphoribosyltransferase (285 aa).

This sequence belongs to the ATP phosphoribosyltransferase family. Long subfamily. The cofactor is Mg(2+).

It is found in the cytoplasm. It catalyses the reaction 1-(5-phospho-beta-D-ribosyl)-ATP + diphosphate = 5-phospho-alpha-D-ribose 1-diphosphate + ATP. The protein operates within amino-acid biosynthesis; L-histidine biosynthesis; L-histidine from 5-phospho-alpha-D-ribose 1-diphosphate: step 1/9. With respect to regulation, feedback inhibited by histidine. In terms of biological role, catalyzes the condensation of ATP and 5-phosphoribose 1-diphosphate to form N'-(5'-phosphoribosyl)-ATP (PR-ATP). Has a crucial role in the pathway because the rate of histidine biosynthesis seems to be controlled primarily by regulation of HisG enzymatic activity. The sequence is that of ATP phosphoribosyltransferase from Sulfurisphaera tokodaii (strain DSM 16993 / JCM 10545 / NBRC 100140 / 7) (Sulfolobus tokodaii).